The primary structure comprises 124 residues: Small ribosomal subunit protein eS6 (124 aa).

The protein belongs to the eukaryotic ribosomal protein eS6 family.

This is Small ribosomal subunit protein eS6 from Methanococcus maripaludis (strain C6 / ATCC BAA-1332).